Reading from the N-terminus, the 176-residue chain is 2-C-methyl-D-erythritol 2,4-cyclodiphosphate synthase (176 aa).

3 residues coordinate a divalent metal cation: D23, H25, and H60. A 4-CDP-2-C-methyl-D-erythritol 2-phosphate-binding site is contributed by 23-25 (DSH). 149 to 152 (TSGE) is a 4-CDP-2-C-methyl-D-erythritol 2-phosphate binding site.

Belongs to the IspF family. In terms of assembly, homotrimer. A divalent metal cation is required as a cofactor.

It carries out the reaction 4-CDP-2-C-methyl-D-erythritol 2-phosphate = 2-C-methyl-D-erythritol 2,4-cyclic diphosphate + CMP. Its pathway is isoprenoid biosynthesis; isopentenyl diphosphate biosynthesis via DXP pathway; isopentenyl diphosphate from 1-deoxy-D-xylulose 5-phosphate: step 4/6. Involved in the biosynthesis of isopentenyl diphosphate (IPP) and dimethylallyl diphosphate (DMAPP), two major building blocks of isoprenoid compounds. Catalyzes the conversion of 4-diphosphocytidyl-2-C-methyl-D-erythritol 2-phosphate (CDP-ME2P) to 2-C-methyl-D-erythritol 2,4-cyclodiphosphate (ME-CPP) with a corresponding release of cytidine 5-monophosphate (CMP). This Chlamydia felis (strain Fe/C-56) (Chlamydophila felis) protein is 2-C-methyl-D-erythritol 2,4-cyclodiphosphate synthase.